We begin with the raw amino-acid sequence, 400 residues long: uncharacterized protein (400 aa).

Residues Asn-161–Leu-380 enclose the TR mART core domain.

This is an uncharacterized protein from Acanthamoeba polyphaga (Amoeba).